A 146-amino-acid polypeptide reads, in one-letter code: Angiogenin (146 aa).

The N-terminal stretch at 1–24 is a signal peptide; it reads MVMGPHLLLLVFILGLGLTPPTLA. Gln-25 is subject to Pyrrolidone carboxylic acid. The Proton acceptor role is filled by His-37. 3 cysteine pairs are disulfide-bonded: Cys-50/Cys-105, Cys-63/Cys-116, and Cys-81/Cys-131. Residues 55 to 59 carry the Nucleolar localization signal motif; sequence RLRNM. TRNA is bound by residues Cys-105 and Ile-127. Catalysis depends on His-138, which acts as the Proton donor.

This sequence belongs to the pancreatic ribonuclease family. In terms of assembly, homodimer. Interacts with RNH1; inhibiting ANG ribonuclease activity. Interacts with PCNA.

The protein resides in the secreted. It is found in the nucleus. It localises to the nucleolus. The protein localises to the cytoplasm. Its subcellular location is the stress granule. Has weak tRNA ribonuclease activity by itself due to partial autoinhibition by its C-terminus, which folds into a short alpha-helix that partially occludes the substrate-binding site. In absence of stress, the ribonuclease activity is inhibited by RNH1 in the cytoplasm. In response to stress, dissociates from RNH1 in the cytoplasm and associates with cytoplasmic ribosomes with vacant A-sites: ribosomes directly activate the tRNA ribonuclease activity of ANG by refolding the C-terminal alpha-helix. In response to stress, the angiogenic activity of ANG is inhibited by RNH1 in the nucleus. Functionally, secreted ribonuclease that can either promote or restrict cell proliferation of target cells, depending on the context. Endocytosed in target cells via its receptor PLXNB2 and translocates to the cytoplasm or nucleus. Under stress conditions, localizes to the cytoplasm and promotes the assembly of stress granules (SGs): specifically cleaves a subset of tRNAs within anticodon loops to produce tRNA-derived stress-induced fragments (tiRNAs), resulting in translation repression and inhibition of cell proliferation. tiRNas also prevent formation of apoptosome, thereby promoting cell survival. Preferentially cleaves RNAs between a pyrimidine and an adenosine residue, suggesting that it cleaves the anticodon loop of tRNA(Ala) (32-UUAGCAU-38) after positions 33 and 36. Cleaves a subset of tRNAs, including tRNA(Ala), tRNA(Glu), tRNA(Gly), tRNA(Lys), tRNA(Val), tRNA(His), tRNA(Asp) and tRNA(Sec). Under growth conditions and in differentiated cells, translocates to the nucleus and stimulates ribosomal RNA (rRNA) transcription, including that containing the initiation site sequences of 45S rRNA, thereby promoting cell growth and proliferation. Angiogenin induces vascularization of normal and malignant tissues via its ability to promote rRNA transcription. Involved in hematopoietic stem and progenitor cell (HSPC) growth and survival by promoting rRNA transcription in growth conditions and inhibiting translation in response to stress, respectively. Mediates the crosstalk between myeloid and intestinal epithelial cells to protect the intestinal epithelial barrier integrity: secreted by myeloid cells and promotes intestinal epithelial cells proliferation and survival. Also mediates osteoclast-endothelial cell crosstalk in growing bone: produced by osteoclasts and protects the neighboring vascular cells against senescence by promoting rRNA transcription. The chain is Angiogenin (ANG) from Saimiri sciureus (Common squirrel monkey).